The chain runs to 179 residues: tRNA-splicing endonuclease (179 aa).

Active-site residues include Tyr115, His125, and Lys156.

Belongs to the tRNA-intron endonuclease family. Archaeal short subfamily. As to quaternary structure, homotetramer; although the tetramer contains four active sites, only two participate in the cleavage. Therefore, it should be considered as a dimer of dimers.

It carries out the reaction pretRNA = a 3'-half-tRNA molecule with a 5'-OH end + a 5'-half-tRNA molecule with a 2',3'-cyclic phosphate end + an intron with a 2',3'-cyclic phosphate and a 5'-hydroxyl terminus.. Endonuclease that removes tRNA introns. Cleaves pre-tRNA at the 5'- and 3'-splice sites to release the intron. The products are an intron and two tRNA half-molecules bearing 2',3' cyclic phosphate and 5'-OH termini. Recognizes a pseudosymmetric substrate in which 2 bulged loops of 3 bases are separated by a stem of 4 bp. This is tRNA-splicing endonuclease (endA) from Methanocaldococcus jannaschii (strain ATCC 43067 / DSM 2661 / JAL-1 / JCM 10045 / NBRC 100440) (Methanococcus jannaschii).